Here is a 401-residue protein sequence, read N- to C-terminus: 8-amino-7-oxononanoate synthase (401 aa).

Substrate is bound at residue Arg-19. 106–107 (GY) lines the pyridoxal 5'-phosphate pocket. His-131 is a substrate binding site. 3 residues coordinate pyridoxal 5'-phosphate: Ser-176, His-204, and Thr-233. Position 236 is an N6-(pyridoxal phosphate)lysine (Lys-236). A substrate-binding site is contributed by Thr-350.

Belongs to the class-II pyridoxal-phosphate-dependent aminotransferase family. BioF subfamily. In terms of assembly, homodimer. It depends on pyridoxal 5'-phosphate as a cofactor.

The catalysed reaction is 6-carboxyhexanoyl-[ACP] + L-alanine + H(+) = (8S)-8-amino-7-oxononanoate + holo-[ACP] + CO2. It participates in cofactor biosynthesis; biotin biosynthesis. Functionally, catalyzes the decarboxylative condensation of pimeloyl-[acyl-carrier protein] and L-alanine to produce 8-amino-7-oxononanoate (AON), [acyl-carrier protein], and carbon dioxide. The sequence is that of 8-amino-7-oxononanoate synthase from Pseudomonas paraeruginosa (strain DSM 24068 / PA7) (Pseudomonas aeruginosa (strain PA7)).